Consider the following 156-residue polypeptide: Small ribosomal subunit protein uS7 (156 aa).

Belongs to the universal ribosomal protein uS7 family. Part of the 30S ribosomal subunit. Contacts proteins S9 and S11.

Functionally, one of the primary rRNA binding proteins, it binds directly to 16S rRNA where it nucleates assembly of the head domain of the 30S subunit. Is located at the subunit interface close to the decoding center, probably blocks exit of the E-site tRNA. The chain is Small ribosomal subunit protein uS7 from Streptococcus pyogenes serotype M1.